Consider the following 175-residue polypeptide: Co-chaperone protein HscB homolog (175 aa).

Positions Ser7–Leu79 constitute a J domain.

Belongs to the HscB family. Interacts with HscA and stimulates its ATPase activity.

Functionally, co-chaperone involved in the maturation of iron-sulfur cluster-containing proteins. Seems to help targeting proteins to be folded toward HscA. In Burkholderia multivorans (strain ATCC 17616 / 249), this protein is Co-chaperone protein HscB homolog.